The following is a 206-amino-acid chain: Pyridoxine/pyridoxamine 5'-phosphate oxidase (206 aa).

FMN contacts are provided by residues 53–58, 68–69, lysine 75, and glutamine 97; these read RMVLLK and YT. Substrate is bound at residue lysine 58. Tyrosine 115, arginine 119, and serine 123 together coordinate substrate. Residues 132-133 and tryptophan 177 contribute to the FMN site; that span reads QS. Position 183–185 (183–185) interacts with substrate; sequence RLH. Arginine 187 is a binding site for FMN.

This sequence belongs to the pyridoxamine 5'-phosphate oxidase family. Homodimer. FMN serves as cofactor.

It carries out the reaction pyridoxamine 5'-phosphate + O2 + H2O = pyridoxal 5'-phosphate + H2O2 + NH4(+). The enzyme catalyses pyridoxine 5'-phosphate + O2 = pyridoxal 5'-phosphate + H2O2. It participates in cofactor metabolism; pyridoxal 5'-phosphate salvage; pyridoxal 5'-phosphate from pyridoxamine 5'-phosphate: step 1/1. The protein operates within cofactor metabolism; pyridoxal 5'-phosphate salvage; pyridoxal 5'-phosphate from pyridoxine 5'-phosphate: step 1/1. Its function is as follows. Catalyzes the oxidation of either pyridoxine 5'-phosphate (PNP) or pyridoxamine 5'-phosphate (PMP) into pyridoxal 5'-phosphate (PLP). This is Pyridoxine/pyridoxamine 5'-phosphate oxidase from Rhizobium etli (strain ATCC 51251 / DSM 11541 / JCM 21823 / NBRC 15573 / CFN 42).